The primary structure comprises 147 residues: Hemoglobin subunit beta (147 aa).

The residue at position 2 (V2) is an N-acetylvaline. Residues 3–147 form the Globin domain; that stretch reads HLADDEKAAV…VSTALAHKYH (145 aa). The residue at position 45 (S45) is a Phosphoserine. The residue at position 60 (K60) is an N6-acetyllysine. H64 is a heme b binding site. K83 is subject to N6-acetyllysine. H93 contacts heme b. The residue at position 94 (C94) is an S-nitrosocysteine. At K145 the chain carries N6-acetyllysine.

The protein belongs to the globin family. Heterotetramer of two alpha chains and two beta chains. In terms of tissue distribution, red blood cells.

In terms of biological role, involved in oxygen transport from the lung to the various peripheral tissues. This Bradypus tridactylus (Pale-throated three-toed sloth) protein is Hemoglobin subunit beta (HBB).